We begin with the raw amino-acid sequence, 223 residues long: Ribonuclease T (223 aa).

The Exonuclease domain maps to Val-20–Phe-194. Residues Asp-23, Glu-25, His-181, and Asp-186 each contribute to the Mg(2+) site. Residue His-181 is the Proton donor/acceptor of the active site.

It belongs to the RNase T family. In terms of assembly, homodimer. Requires Mg(2+) as cofactor.

Its function is as follows. Trims short 3' overhangs of a variety of RNA species, leaving a one or two nucleotide 3' overhang. Responsible for the end-turnover of tRNA: specifically removes the terminal AMP residue from uncharged tRNA (tRNA-C-C-A). Also appears to be involved in tRNA biosynthesis. The polypeptide is Ribonuclease T (Shewanella baltica (strain OS185)).